Here is a 360-residue protein sequence, read N- to C-terminus: Transcription factor MYB39 (360 aa).

HTH myb-type domains lie at 10-62 and 63-117; these read DKGV…MNYL and RPDI…RKKL. DNA-binding regions (H-T-H motif) lie at residues 38-62 and 90-113; these read WRSLPKLAGLNRCGKSCRLRWMNYL and WSKIAGHLPGRTDNEIKNYWNTHM. Residues 299–324 form a disordered region; it reads PSTGSVSVSPETTSLNHPSTAQHSSG.

Its subcellular location is the nucleus. The protein is Transcription factor MYB39 (MYB39) of Arabidopsis thaliana (Mouse-ear cress).